The sequence spans 175 residues: MTINFKDYIASVQDYPEPGIIFRDISPLMADGKAYAAATDEIAAYAQDKGVEMIVGPEARGFIVGCPVAYKLGIGFAPARKKGKLPRPTVKASYDLEYGEATLYLHKDAIKPGQRVLVCDDLLATGGTIAATIRLVEQLGGIVVGTAFLIELSDLHGRDKIKDYDMFTLMSYTGA.

Belongs to the purine/pyrimidine phosphoribosyltransferase family. In terms of assembly, homodimer.

It localises to the cytoplasm. It catalyses the reaction AMP + diphosphate = 5-phospho-alpha-D-ribose 1-diphosphate + adenine. The protein operates within purine metabolism; AMP biosynthesis via salvage pathway; AMP from adenine: step 1/1. Catalyzes a salvage reaction resulting in the formation of AMP, that is energically less costly than de novo synthesis. The polypeptide is Adenine phosphoribosyltransferase (Lacticaseibacillus paracasei (strain ATCC 334 / BCRC 17002 / CCUG 31169 / CIP 107868 / KCTC 3260 / NRRL B-441) (Lactobacillus paracasei)).